The primary structure comprises 45 residues: Bacteriocin fulvocin-C (45 aa).

In terms of biological role, bacteriocin. The chain is Bacteriocin fulvocin-C from Myxococcus fulvus.